A 96-amino-acid chain; its full sequence is Co-chaperonin GroES (96 aa).

The protein belongs to the GroES chaperonin family. Heptamer of 7 subunits arranged in a ring. Interacts with the chaperonin GroEL.

It is found in the cytoplasm. Its function is as follows. Together with the chaperonin GroEL, plays an essential role in assisting protein folding. The GroEL-GroES system forms a nano-cage that allows encapsulation of the non-native substrate proteins and provides a physical environment optimized to promote and accelerate protein folding. GroES binds to the apical surface of the GroEL ring, thereby capping the opening of the GroEL channel. The polypeptide is Co-chaperonin GroES (Allochromatium vinosum (Chromatium vinosum)).